Consider the following 637-residue polypeptide: Biosynthetic arginine decarboxylase (637 aa).

At Lys-101 the chain carries N6-(pyridoxal phosphate)lysine. Position 286–296 (286–296 (FDVGGGLAVDY)) interacts with substrate.

The protein belongs to the Orn/Lys/Arg decarboxylase class-II family. SpeA subfamily. It depends on Mg(2+) as a cofactor. The cofactor is pyridoxal 5'-phosphate.

The catalysed reaction is L-arginine + H(+) = agmatine + CO2. It participates in amine and polyamine biosynthesis; agmatine biosynthesis; agmatine from L-arginine: step 1/1. Functionally, catalyzes the biosynthesis of agmatine from arginine. This chain is Biosynthetic arginine decarboxylase, found in Shewanella piezotolerans (strain WP3 / JCM 13877).